The sequence spans 375 residues: Putative type I specificity subunit S.MpnORF638P (375 aa).

It belongs to the type-I restriction system S methylase family. The methyltransferase is composed of M and S polypeptides.

The specificity (S) subunit of a type I methyltransferase (MTase); this subunit dictates DNA sequence specificity. The single R subunit has multiple frameshifts and is probably not expressed. This Mycoplasma pneumoniae (strain ATCC 29342 / M129 / Subtype 1) (Mycoplasmoides pneumoniae) protein is Putative type I specificity subunit S.MpnORF638P.